Reading from the N-terminus, the 419-residue chain is Metacaspase-1 (419 aa).

The segment at 1 to 109 (MSGYPGYNNG…PPQGMHAFGQ (109 aa)) is disordered. 2 stretches are compositionally biased toward pro residues: residues 18–37 (QYPPQPYYPPQPAYGAPPPQ) and 45–61 (QPPPPQQPYGYSQPPPQ). Residues 83-95 (SVNSNAYTNGNQN) show a composition bias toward polar residues. Active-site residues include histidine 210 and cysteine 266.

This sequence belongs to the peptidase C14B family.

Functionally, involved in cell death (apoptosis). This Botryotinia fuckeliana (strain B05.10) (Noble rot fungus) protein is Metacaspase-1 (casA).